The primary structure comprises 357 residues: Guanine nucleotide-binding protein alpha-1 subunit (357 aa).

A lipid anchor (N-myristoyl glycine) is attached at glycine 2. Cysteine 4 carries the S-palmitoyl cysteine lipid modification. In terms of domain architecture, G-alpha spans 32 to 357 (NIIKLLLLGA…STKLKGCGLY (326 aa)). Residues 35-48 (KLLLLGAGESGKST) form a G1 motif region. Positions 43, 44, 45, 46, 47, 48, 151, 176, 182, 204, 270, 271, 273, and 329 each coordinate GTP. Residue serine 47 coordinates Mg(2+). Residues 174 to 182 (DILHTRVPT) are G2 motif. Threonine 182 contacts Mg(2+). Positions 197–206 (FRVFDVGGQR) are G3 motif. A G4 motif region spans residues 266 to 273 (ILFLNKID). The interval 327-332 (TCATDT) is G5 motif.

It belongs to the G-alpha family. G proteins are composed of 3 units; alpha, beta and gamma. The alpha chain contains the guanine nucleotide binding site. Mg(2+) serves as cofactor.

Functionally, guanine nucleotide-binding proteins (G proteins) are involved as modulators or transducers in various transmembrane signaling systems. The sequence is that of Guanine nucleotide-binding protein alpha-1 subunit (gpa-1) from Caenorhabditis elegans.